A 451-amino-acid chain; its full sequence is 12S seed storage protein CRD (451 aa).

The first 25 residues, 1–25 (MHKLLFSLLSVVSLSFLLFFHGAEA), serve as a signal peptide directing secretion. Cystine bridges form between Cys-36-Cys-69 and Cys-112-Cys-277. The residue at position 39 (Ser-39) is a Phosphoserine. Cupin type-1 domains follow at residues 42–234 (NSLA…ETAK) and 283–432 (ENID…EEAK). Thr-115 is subject to Phosphothreonine. At Ser-302 the chain carries Phosphoserine. The residue at position 396 (Thr-396) is a Phosphothreonine. Ser-437 carries the post-translational modification Phosphoserine.

It belongs to the 11S seed storage protein (globulins) family. In terms of assembly, hexamer; each subunit is composed of an acidic and a basic chain derived from a single precursor and linked by a disulfide bond. Post-translationally, ubiquitinated. In terms of processing, proteolytically processed during seed maturation at a conserved Asn-Gly peptide bond by an asparaginyl endopeptidase to produce two mature polypeptides referred to as alpha and beta subunits that are joined together by a disulfide bond. Phosphorylated in seeds on some Tyr residues in response to abscisic acid (ABA). In terms of tissue distribution, accumulates in seeds 8 days after anthesis.

Its subcellular location is the protein storage vacuole. Seed storage protein. The chain is 12S seed storage protein CRD (CRD) from Arabidopsis thaliana (Mouse-ear cress).